A 743-amino-acid polypeptide reads, in one-letter code: Protein will decrease acetylation (743 aa).

6 WD repeats span residues 389–428 (ERSR…CRGK), 493–524 (LRGH…MRCW), 535–576 (YRSH…ALII), 577–618 (YAGH…LMRV), 619–660 (FADC…QLAE), and 661–702 (LKDH…PMSD).

The protein belongs to the WD repeat TAF5 family. In terms of assembly, component of the Spt-Ada-Gcn5 acetyltransferase (SAGA) complex consisting of wda/Taf5L, Saf6, Taf9, Taf10b, Taf12, Ada1, Spt3, Spt7, Spt20, Sf3b3, Sf3b5, Nipped-A/Tra1, a histone acetyltransferase (HAT) module made up of Gcn5, Ada2b (Isoform B), Ada3 and Sgf29, and a deubiquitinase (DUB) module made up of not/nonstop, Sgf11 and e(y)2 tethered to SAGA by Atxn7. Not essential for the assembly or integrity of the SAGA complex. Not a component of the Ada2a-containing ATAC complex.

It is found in the nucleus. The protein localises to the chromosome. Its function is as follows. Component of the transcription regulatory complex SAGA, a multiprotein complex that activates transcription by remodeling chromatin and mediating histone acetylation and deubiquitination. The SAGA complex predominantly acetylates histone H3. Involved in acetylation of histone H3 on 'Lys-10' (H3K9ac) by the SAGA complex in the larval central nervous system. Involved in SAGA complex coactivator functions. Required for oogenesis. This Drosophila melanogaster (Fruit fly) protein is Protein will decrease acetylation.